A 500-amino-acid chain; its full sequence is MSRLERLTSLNVVAGSDLRRTSIIGTIGPKTNNPETLVALRKAGLNIVRMNFSHGSYEYHKSVIDNARKSEELYPGRPLAIALDTKGPEIRTGTTTNDVDYPIPPNHEMIFTTDDKYAKACDDKIMYVDYKNITKVISAGRIIYVDDGVLSFQVLEVVDDKTLKVKALNAGKICSHKGVNLPGTDVDLPALSEKDKEDLRFGVKNGVHMVFASFIRTANDVLTIREVLGEQGKDVKIIVKIENQQGVNNFDEILKVTDGVMVARGDLGIEIPAPEVLAVQKKLIAKSNLAGKPVICATQMLESMTYNPRPTRAEVSDVGNAILDGADCVMLSGETAKGNYPINAVTTMAETAVIAEQAIAYLPNYDDMRNCTPKPTSTTETVAASAVAAVFEQKAKAIIVLSTSGTTPRLVSKYRPNCPIILVTRCPRAARFSHLYRGVFPFVFEKEPVSDWTDDVEARINFGIEKAKEFGILKKGDTYVSIQGFKAGAGHSNTLQVSTV.

Residue S2 is modified to N-acetylserine. Residues S9 and S16 each carry the phosphoserine modification. Phosphothreonine is present on T31. Substrate is bound at residue R49. 2 residues coordinate K(+): N51 and S53. Residue 51-54 (NFSH) participates in ATP binding. S70 carries the phosphoserine modification. K(+)-binding residues include D84 and T85. R91 contributes to the ATP binding site. Glycyl lysine isopeptide (Lys-Gly) (interchain with G-Cter in URM1) cross-links involve residues K119, K124, K161, K164, and K166. Position 177 (K177) interacts with ATP. Phosphothreonine is present on T184. Residue K204 forms a Glycyl lysine isopeptide (Lys-Gly) (interchain with G-Cter in ubiquitin) linkage. S213 is modified (phosphoserine). K240 contributes to the substrate binding site. Residue E242 participates in Mn(2+) binding. Residue K255 forms a Glycyl lysine isopeptide (Lys-Gly) (interchain with G-Cter in ubiquitin) linkage. Residues G265 and D266 each contribute to the substrate site. Residue D266 participates in Mn(2+) binding. K292 participates in a covalent cross-link: Glycyl lysine isopeptide (Lys-Gly) (interchain with G-Cter in URM1). Residue T298 coordinates substrate. The residue at position 316 (S316) is a Phosphoserine. K394 is covalently cross-linked (Glycyl lysine isopeptide (Lys-Gly) (interchain with G-Cter in URM1)). Residue 402-407 (STSGTT) participates in beta-D-fructose 1,6-bisphosphate binding. C418 is subject to Cysteine persulfide. K446 is covalently cross-linked (Glycyl lysine isopeptide (Lys-Gly) (interchain with G-Cter in ubiquitin); alternate). K446 participates in a covalent cross-link: Glycyl lysine isopeptide (Lys-Gly) (interchain with G-Cter in URM1); alternate. A Phosphoserine modification is found at S450. Positions 452 and 459 each coordinate beta-D-fructose 1,6-bisphosphate. T478 is modified (phosphothreonine). G484 serves as a coordination point for beta-D-fructose 1,6-bisphosphate.

Belongs to the pyruvate kinase family. Homotetramer. Requires Mg(2+) as cofactor. K(+) is required as a cofactor. Post-translationally, conjugated to URM1, a ubiquitin-like protein, in response to oxidative stresses. The attachment of URM1 to lysine residues exclusively depends on the presence of a peroxidatic cysteine in the target protein, with low specificity for the particular residue, motif, or structural context at which urmylation can occur. The URM1-conjugation reaction is mechanistically and directly coupled to the process of cysteine persulfidation, transfering the sulfur atom of the URM1 thiocarboxyl group to redox-active cysteine residues in the target protein if it is exposed to oxidative conditions. In terms of processing, persulfidated on specific redox-active cysteine residues. Persulfidation (also called protein S-sulfhydration) may provide a molecular mechanism that enables cells to protect vulnerable cysteine residues from reactive oxygen species (ROS) under stress conditions.

It catalyses the reaction pyruvate + ATP = phosphoenolpyruvate + ADP + H(+). It participates in carbohydrate degradation; glycolysis; pyruvate from D-glyceraldehyde 3-phosphate: step 5/5. The activity is regulated by glucose levels. Activated by fructose-1,6-bisphosphate. The polypeptide is Pyruvate kinase 1 (CDC19) (Saccharomyces cerevisiae (strain ATCC 204508 / S288c) (Baker's yeast)).